We begin with the raw amino-acid sequence, 238 residues long: 3,4-dihydroxy-2-butanone 4-phosphate synthase (238 aa).

D-ribulose 5-phosphate contacts are provided by residues 26 to 27, D31, 166 to 170, and E190; these read RE and RVGQT. E27 serves as a coordination point for Mg(2+).

Belongs to the DHBP synthase family. Homodimer. Mg(2+) serves as cofactor. Mn(2+) is required as a cofactor.

It catalyses the reaction D-ribulose 5-phosphate = (2S)-2-hydroxy-3-oxobutyl phosphate + formate + H(+). It participates in cofactor biosynthesis; riboflavin biosynthesis; 2-hydroxy-3-oxobutyl phosphate from D-ribulose 5-phosphate: step 1/1. In terms of biological role, catalyzes the conversion of D-ribulose 5-phosphate to formate and 3,4-dihydroxy-2-butanone 4-phosphate. The polypeptide is 3,4-dihydroxy-2-butanone 4-phosphate synthase (Archaeoglobus fulgidus (strain ATCC 49558 / DSM 4304 / JCM 9628 / NBRC 100126 / VC-16)).